We begin with the raw amino-acid sequence, 212 residues long: Large ribosomal subunit protein uL3 (212 aa).

Residue Gln-153 is modified to N5-methylglutamine.

Belongs to the universal ribosomal protein uL3 family. Part of the 50S ribosomal subunit. Forms a cluster with proteins L14 and L19. In terms of processing, methylated by PrmB.

Functionally, one of the primary rRNA binding proteins, it binds directly near the 3'-end of the 23S rRNA, where it nucleates assembly of the 50S subunit. The sequence is that of Large ribosomal subunit protein uL3 from Shewanella loihica (strain ATCC BAA-1088 / PV-4).